The primary structure comprises 277 residues: Ribosomal RNA small subunit methyltransferase A (277 aa).

S-adenosyl-L-methionine-binding residues include N27, L29, G54, E75, D95, and N118.

Belongs to the class I-like SAM-binding methyltransferase superfamily. rRNA adenine N(6)-methyltransferase family. RsmA subfamily.

The protein resides in the cytoplasm. The enzyme catalyses adenosine(1518)/adenosine(1519) in 16S rRNA + 4 S-adenosyl-L-methionine = N(6)-dimethyladenosine(1518)/N(6)-dimethyladenosine(1519) in 16S rRNA + 4 S-adenosyl-L-homocysteine + 4 H(+). Specifically dimethylates two adjacent adenosines (A1518 and A1519) in the loop of a conserved hairpin near the 3'-end of 16S rRNA in the 30S particle. May play a critical role in biogenesis of 30S subunits. This is Ribosomal RNA small subunit methyltransferase A from Chlamydia muridarum (strain MoPn / Nigg).